The primary structure comprises 417 residues: Serine--tRNA ligase (417 aa).

232 to 234 (TAE) is an L-serine binding site. 263 to 265 (RKE) is a binding site for ATP. Residue Glu-286 coordinates L-serine. 350-353 (EISS) lines the ATP pocket. L-serine is bound at residue Ser-385.

It belongs to the class-II aminoacyl-tRNA synthetase family. Type-1 seryl-tRNA synthetase subfamily. As to quaternary structure, homodimer. The tRNA molecule binds across the dimer.

The protein localises to the cytoplasm. It catalyses the reaction tRNA(Ser) + L-serine + ATP = L-seryl-tRNA(Ser) + AMP + diphosphate + H(+). The catalysed reaction is tRNA(Sec) + L-serine + ATP = L-seryl-tRNA(Sec) + AMP + diphosphate + H(+). The protein operates within aminoacyl-tRNA biosynthesis; selenocysteinyl-tRNA(Sec) biosynthesis; L-seryl-tRNA(Sec) from L-serine and tRNA(Sec): step 1/1. Catalyzes the attachment of serine to tRNA(Ser). Is also able to aminoacylate tRNA(Sec) with serine, to form the misacylated tRNA L-seryl-tRNA(Sec), which will be further converted into selenocysteinyl-tRNA(Sec). The sequence is that of Serine--tRNA ligase from Sulfurihydrogenibium sp. (strain YO3AOP1).